A 281-amino-acid chain; its full sequence is 2-dehydro-3-deoxyphosphooctonate aldolase (281 aa).

Belongs to the KdsA family.

Its subcellular location is the cytoplasm. The catalysed reaction is D-arabinose 5-phosphate + phosphoenolpyruvate + H2O = 3-deoxy-alpha-D-manno-2-octulosonate-8-phosphate + phosphate. It participates in carbohydrate biosynthesis; 3-deoxy-D-manno-octulosonate biosynthesis; 3-deoxy-D-manno-octulosonate from D-ribulose 5-phosphate: step 2/3. Its pathway is bacterial outer membrane biogenesis; lipopolysaccharide biosynthesis. This chain is 2-dehydro-3-deoxyphosphooctonate aldolase, found in Pseudomonas fluorescens (strain SBW25).